We begin with the raw amino-acid sequence, 57 residues long: Thiocillin GE37468 (57 aa).

Residues 1 to 42 (MGNNEEYFIDVNDLSIDVFDVVEQGGAVTALTADHGMPEVGA) constitute a propeptide, removed in mature form. Residues 43-44 (ST) constitute a cross-link (5-methyloxazole-4-carboxylic acid (Ser-Thr)). Residues 43–52 (STNCFCYICC) constitute a cross-link (pyridine-2,5-dicarboxylic acid (Ser-Cys) (with S-53)). Residues 43–53 (STNCFCYICCS) constitute a cross-link (pyridine-2,5-dicarboxylic acid (Ser-Ser) (with C-52)). The segment at residues 45 to 46 (NC) is a cross-link (thiazole-4-carboxylic acid (Asn-Cys)). A cross-link (thiazoline-4-carboxylic acid (Phe-Cys)) is located at residues 47 to 48 (FC). I50 carries the post-translational modification 5-hydroxy-3-methylproline (Ile). The segment at residues 50–51 (IC) is a cross-link (thiazole-4-carboxylic acid (Ile-Cys)). The segment at residues 51 to 52 (CC) is a cross-link (thiazole-4-carboxylic acid (Cys-Cys)). Positions 53 to 54 (SC) form a cross-link, thiazole-4-carboxylic acid (Ser-Cys). S55 and S56 each carry 2,3-didehydroalanine (Ser). Residue N57 is a propeptide, removed in mature form.

In terms of processing, maturation of thiazole and oxazole containing antibiotics involves the enzymatic condensation of a Cys, Ser or Thr with the alpha-carbonyl of the preceding amino acid to form a thioether or ether bond, then dehydration to form a double bond with the alpha-amino nitrogen. Thiazoline or oxazoline ring are dehydrogenated to form thiazole or oxazole rings. Post-translationally, maturation of pyridinyl containing antibiotics involves the cross-linking of a Ser and a Cys-Ser pair usually separated by 7 or 8 residues along the peptide chain. The Ser residues are dehydrated to didehydroalanines, then bonded between their beta carbons. The alpha carbonyl of the Cys condenses with alpha carbon of the first Ser to form a pyridinyl ring. The ring may be multiply dehydrogenated to form a pyridine ring with loss of the amino nitrogen of the first Ser.

Its subcellular location is the secreted. In terms of biological role, has bacteriocidal activity against both aerobic and anaerobic Gram-positive bacteria. Inhibits growth of B.subtilis (MIC=0.047 ug/ml) and methicillin-resistant S.aureus (MRSA) (MIC=0.047 ug/ml). Has poor activity against Gram-negative bacteria, with the exception of B.fragilis. Inhibits bacterial protein biosynthesis by acting on elongation factor Tu (EF-Tu). Full antibiotic activity depends on the presence of the modified residue Ile-50. This is Thiocillin GE37468 (getA) from Streptomyces sp.